The sequence spans 437 residues: Lipid II isoglutaminyl synthase (glutamine-hydrolyzing) subunit MurT (437 aa).

Residues C202, C205, C224, and C226 each coordinate Zn(2+). The active site involves D349.

Belongs to the MurCDEF family. MurT subfamily. As to quaternary structure, forms a heterodimer with GatD.

It carries out the reaction beta-D-GlcNAc-(1-&gt;4)-Mur2Ac(oyl-L-Ala-gamma-D-Glu-L-Lys-D-Ala-D-Ala)-di-trans,octa-cis-undecaprenyl diphosphate + L-glutamine + ATP + H2O = beta-D-GlcNAc-(1-&gt;4)-Mur2Ac(oyl-L-Ala-D-isoglutaminyl-L-Lys-D-Ala-D-Ala)-di-trans,octa-cis-undecaprenyl diphosphate + L-glutamate + ADP + phosphate + H(+). It catalyses the reaction beta-D-GlcNAc-(1-&gt;4)-Mur2Ac(oyl-L-Ala-gamma-D-Glu-L-Lys-D-Ala-D-Ala)-di-trans,octa-cis-undecaprenyl diphosphate + ATP = beta-D-GlcNAc-(1-&gt;4)-Mur2Ac(oyl-L-Ala-gamma-D-O-P-Glu-L-Lys-D-Ala-D-Ala)-di-trans,octa-cis-undecaprenyl diphosphate + ADP. The catalysed reaction is beta-D-GlcNAc-(1-&gt;4)-Mur2Ac(oyl-L-Ala-gamma-D-O-P-Glu-L-Lys-D-Ala-D-Ala)-di-trans,octa-cis-undecaprenyl diphosphate + NH4(+) = beta-D-GlcNAc-(1-&gt;4)-Mur2Ac(oyl-L-Ala-D-isoglutaminyl-L-Lys-D-Ala-D-Ala)-di-trans,octa-cis-undecaprenyl diphosphate + phosphate + H(+). Its pathway is cell wall biogenesis; peptidoglycan biosynthesis. Its function is as follows. The lipid II isoglutaminyl synthase complex catalyzes the formation of alpha-D-isoglutamine in the cell wall lipid II stem peptide. The MurT subunit catalyzes the ATP-dependent amidation of D-glutamate residue of lipid II, converting it to an isoglutamine residue. This Staphylococcus aureus (strain N315) protein is Lipid II isoglutaminyl synthase (glutamine-hydrolyzing) subunit MurT.